The following is a 430-amino-acid chain: Chromatin assembly factor 1 p55 subunit (430 aa).

Serine 11 and serine 100 each carry phosphoserine. 6 WD repeats span residues asparagine 126–threonine 159, glycine 179–aspartate 210, glycine 229–aspartate 260, alanine 275–aspartate 306, serine 319–aspartate 350, and glycine 376–glutamine 407.

It belongs to the WD repeat RBAP46/RBAP48/MSI1 family. Probably binds directly to helix 1 of the histone fold of histone H4, a region that is not accessible when H4 is in chromatin. Self associates. Associates with chromatin. Component of the CAF-1 complex, composed of Caf1-55, Caf1-105 and Caf1-180; within the CAF-1 complex, Caf1-180 interacts directly with both Caf1-55 and Caf1-105. Component of the NuRD complex, composed of at least Caf1-55, Mi-2, MTA1-like and HDAC1/Rpd3. Within the NuRD complex, Caf1-55 may interact directly with Mi-2, MTA1-like and HDAC1/Rpd3. The NuRD complex may also associate with the methyl-DNA binding protein MBD-like via Caf1-55 and Mi-2. Component of the NURF complex, composed of Caf1-55, E(bx), Nurf-38 and Iswi. Component of the polycomb repressive complex 2 (PRC2, also known as the Esc/E(Z) complex), composed of Caf1-55, esc, E(z), Su(z)12, and possibly pho. PRC2 associates with the accessory components Jarid2 and jing to form the PRC2 Jarid2-jing variant (PRC2.2). PRC2 may also associate with Pcl and HDAC1/Rpd3 during early embryogenesis. Interacts with Rbf and Rbf2. Component of the DREAM complex at least composed of Myb, Caf1-55, mip40, mip120, mip130, E2f2, Dp, Rbf, Rbf2, lin-52, HDAC1/Rpd3 and l(3)mbt.

It localises to the nucleus. Its function is as follows. Core histone-binding subunit that may target chromatin assembly factors, chromatin remodeling factors and histone deacetylases to their histone substrates in a manner that is regulated by nucleosomal DNA. Component of several complexes which regulate chromatin metabolism. These include the chromatin assembly factor 1 (CAF-1) complex, which is required for chromatin assembly following DNA replication and DNA repair; the nucleosome remodeling and deacetylase complex (the NuRD complex), which promotes transcriptional repression by histone deacetylation and nucleosome remodeling; the nucleosome remodeling factor (NURF) complex, which catalyzes ATP-dependent nucleosome sliding and facilitates transcription of chromatin; and the polycomb group (PcG) repressor complex ESC-E(Z), which promotes repression of homeotic genes during development. Also required for transcriptional repression of E2F target genes by E2f2 and Rbf or Rbf2. This Drosophila melanogaster (Fruit fly) protein is Chromatin assembly factor 1 p55 subunit.